Here is a 3357-residue protein sequence, read N- to C-terminus: Versican core protein (3357 aa).

Positions 1 to 23 are cleaved as a signal peptide; that stretch reads MLINMKGILWMCSTLLLTHALHQ. An Ig-like V-type domain is found at 24 to 146; that stretch reads AKMETSPPVK…EDTQDTMSLA (123 aa). Cystine bridges form between C44–C130, C172–C243, C196–C217, C270–C333, and C294–C315. N-linked (GlcNAc...) asparagine glycosylation is present at N57. Link domains are found at residues 150–245 and 251–347; these read VVFH…YCYV and DVFH…YCFK. N-linked (GlcNAc...) asparagine glycosylation is found at N330, N351, and N441. A GAG-alpha (glucosaminoglycan attachment domain) region spans residues 348–1308; that stretch reads PKQNISEATT…IIEVRENKTG (961 aa). A compositionally biased stretch (basic and acidic residues) spans 625-634; sequence EPKTNGKVTE. The tract at residues 625–646 is disordered; it reads EPKTNGKVTEDEFGQSQPTTTF. An O-linked (Xyl...) (chondroitin sulfate) serine glycan is attached at S660. 2 disordered regions span residues 801–863 and 881–908; these read WPGD…KPLE and TSTSIGSAEKSASGEPTTGDRFLPTTST. N-linked (GlcNAc...) asparagine glycosylation occurs at N807. 2 N-linked (GlcNAc...) asparagine glycosylation sites follow: N914 and N951. Disordered regions lie at residues 1010–1088 and 1252–1288; these read SPGA…YPPG and DHMTSKPPVTQPTRPSVVERKTTSKTQELSTSTPAAG. Polar residues-rich tracts occupy residues 1017–1042 and 1275–1286; these read TGVSQGETQEEPQTPGSPFPTFSSTA and SKTQELSTSTPA. N-linked (GlcNAc...) asparagine glycans are attached at residues N1305 and N1371. The segment at 1309 to 3051 is GAG-beta; that stretch reads RLSDMIVSGH…VEGTAVYLPG (1743 aa). Residues 1396 to 1406 are compositionally biased toward basic and acidic residues; sequence DPEAAEARRGQ. Disordered regions lie at residues 1396–1421 and 1458–1524; these read DPEAAEARRGQYESVAPSQNFPDSSA and TYPE…AIEQ. 2 stretches are compositionally biased toward polar residues: residues 1411 to 1421 and 1487 to 1498; these read APSQNFPDSSA and WSESITESSPNL. O-linked (Xyl...) (chondroitin sulfate) serine glycans are attached at residues S1517 and S1599. A disordered region spans residues 1664–1705; that stretch reads LPSPDARPTTVWNSNSTSEWVSDKSFEGRKKKENEDEEGAVN. The segment covering 1673 to 1683 has biased composition (polar residues); it reads TVWNSNSTSEW. N-linked (GlcNAc...) asparagine glycosylation occurs at N1678. The segment covering 1684 to 1697 has biased composition (basic and acidic residues); that stretch reads VSDKSFEGRKKKEN. S1907 and S1931 each carry an O-linked (Xyl...) (chondroitin sulfate) serine glycan. The interval 1926 to 1965 is disordered; it reads VGMGGSDDERVRDTQTSSSIPTTSDNIYPVPDSKGPDSTV. Residues 1939 to 1951 show a composition bias toward polar residues; it reads TQTSSSIPTTSDN. N-linked (GlcNAc...) asparagine glycosylation occurs at N2053. 2 O-linked (Xyl...) (chondroitin sulfate) serine glycosylation sites follow: S2219 and S2226. N2243 carries an N-linked (GlcNAc...) asparagine glycan. Positions 2308 to 2322 are enriched in polar residues; the sequence is TLSHTGTEEPTTSTL. Disordered stretches follow at residues 2308 to 2374 and 2475 to 2494; these read TLSH…ATSP and YPTSTLPSTEPYKSPSEGIE. N2361 is a glycosylation site (N-linked (GlcNAc...) asparagine). Positions 2475–2486 are enriched in low complexity; the sequence is YPTSTLPSTEPY. Residues S2585 and S2586 each carry the phosphoserine modification. N2626 carries an N-linked (GlcNAc...) asparagine glycan. 3 O-linked (Xyl...) (chondroitin sulfate) serine glycosylation sites follow: S2696, S2697, and S2741. Residues 2853-2908 form a disordered region; the sequence is LGGNVHRTEPPSMSRDPALDVSEDESKHKLLEELETSPTKPETSQDFPNKAKDHIP. Residues 2888 to 2899 are compositionally biased toward polar residues; sequence TSPTKPETSQDF. N3029 carries N-linked (GlcNAc...) asparagine glycosylation. Residues 3051–3087 form the EGF-like 1 domain; it reads GPDLCKTNPCLNGGTCYPTETSYVCTCAPGYSGDQCE. Cystine bridges form between C3055-C3066, C3060-C3075, C3077-C3086, C3093-C3104, C3098-C3113, C3115-C3124, C3131-C3142, C3159-C3251, C3227-C3243, C3258-C3301, and C3287-C3314. The 37-residue stretch at 3089–3125 folds into the EGF-like 2; calcium-binding domain; it reads DFDECHSNPCRNGATCVDGFNTFRCLCLPSYVGALCE. The C-type lectin domain occupies 3138–3252; sequence FQGQCYKYFA…CNYHLTYTCK (115 aa). Positions 3256 to 3316 constitute a Sushi domain; it reads VACGQPPVVE…WAMPKITCMN (61 aa). N-linked (GlcNAc...) asparagine glycans are attached at residues N3331 and N3341. Over residues 3331-3342 the composition is skewed to polar residues; that stretch reads NSSSAKDNSINT. The tract at residues 3331–3357 is disordered; it reads NSSSAKDNSINTSKHEHRWSRRQETRR.

This sequence belongs to the aggrecan/versican proteoglycan family. Interacts with FBLN1. Phosphorylated by FAM20C in the extracellular medium. In terms of processing, proteolytically cleaved by ADAMTS5 and ADAMTS15 in the pericellular matrix surrounding myoblasts, facilitating myoblast contact and fusion which is required for skeletal muscle development and regeneration. Expressed in the retina (at protein level). Isoform V2: Only expressed in brain.

Its subcellular location is the secreted. The protein localises to the extracellular space. It localises to the extracellular matrix. The protein resides in the cell projection. It is found in the cilium. Its subcellular location is the photoreceptor outer segment. The protein localises to the interphotoreceptor matrix. May play a role in intercellular signaling and in connecting cells with the extracellular matrix. May take part in the regulation of cell motility, growth and differentiation. Binds hyaluronic acid. In Mus musculus (Mouse), this protein is Versican core protein (Vcan).